Here is a 430-residue protein sequence, read N- to C-terminus: Enolase (430 aa).

Glutamine 166 provides a ligand contact to (2R)-2-phosphoglycerate. Glutamate 208 functions as the Proton donor in the catalytic mechanism. Mg(2+)-binding residues include aspartate 245, glutamate 288, and aspartate 315. (2R)-2-phosphoglycerate contacts are provided by lysine 340, arginine 369, serine 370, and lysine 391. Lysine 340 serves as the catalytic Proton acceptor.

Belongs to the enolase family. Requires Mg(2+) as cofactor.

It is found in the cytoplasm. The protein resides in the secreted. It localises to the cell surface. The enzyme catalyses (2R)-2-phosphoglycerate = phosphoenolpyruvate + H2O. The protein operates within carbohydrate degradation; glycolysis; pyruvate from D-glyceraldehyde 3-phosphate: step 4/5. In terms of biological role, catalyzes the reversible conversion of 2-phosphoglycerate (2-PG) into phosphoenolpyruvate (PEP). It is essential for the degradation of carbohydrates via glycolysis. This Clostridium kluyveri (strain NBRC 12016) protein is Enolase.